The sequence spans 506 residues: ATP synthase subunit alpha (506 aa).

169 to 176 (GDRQTGKT) contacts ATP.

This sequence belongs to the ATPase alpha/beta chains family. As to quaternary structure, F-type ATPases have 2 components, CF(1) - the catalytic core - and CF(0) - the membrane proton channel. CF(1) has five subunits: alpha(3), beta(3), gamma(1), delta(1), epsilon(1). CF(0) has three main subunits: a(1), b(2) and c(9-12). The alpha and beta chains form an alternating ring which encloses part of the gamma chain. CF(1) is attached to CF(0) by a central stalk formed by the gamma and epsilon chains, while a peripheral stalk is formed by the delta and b chains.

It is found in the cell membrane. It catalyses the reaction ATP + H2O + 4 H(+)(in) = ADP + phosphate + 5 H(+)(out). Its function is as follows. Produces ATP from ADP in the presence of a proton gradient across the membrane. The alpha chain is a regulatory subunit. The protein is ATP synthase subunit alpha of Lawsonia intracellularis (strain PHE/MN1-00).